The chain runs to 324 residues: tRNA(Ile)-lysidine synthase (324 aa).

Position 33-38 (33-38 (SGGPDS)) interacts with ATP.

It belongs to the tRNA(Ile)-lysidine synthase family.

The protein localises to the cytoplasm. It catalyses the reaction cytidine(34) in tRNA(Ile2) + L-lysine + ATP = lysidine(34) in tRNA(Ile2) + AMP + diphosphate + H(+). Ligates lysine onto the cytidine present at position 34 of the AUA codon-specific tRNA(Ile) that contains the anticodon CAU, in an ATP-dependent manner. Cytidine is converted to lysidine, thus changing the amino acid specificity of the tRNA from methionine to isoleucine. In Thermobifida fusca (strain YX), this protein is tRNA(Ile)-lysidine synthase.